A 200-amino-acid chain; its full sequence is Lipopolysaccharide core heptose(II)-phosphate phosphatase (200 aa).

Residues 1–25 (MLAFCRSSLKSKKYFIILLALAAIA) form the signal peptide.

It belongs to the phosphoglycerate mutase family. Ais subfamily.

The protein localises to the periplasm. The protein operates within bacterial outer membrane biogenesis; lipopolysaccharide metabolism. Its function is as follows. Catalyzes the dephosphorylation of heptose(II) of the outer membrane lipopolysaccharide core. In Shigella flexneri serotype 5b (strain 8401), this protein is Lipopolysaccharide core heptose(II)-phosphate phosphatase.